We begin with the raw amino-acid sequence, 478 residues long: MAGVEEVAASGSHLNGDLDPDDREEGAASTAEEAAKKKRRKKKKSKGPSAAGEQEPDKESGASVDEVARQLERSALEDKERDEDDEDGDGDGDGATGKKKKKKKKKRGPKVQTDPPSVPICDLYPNGVFPKGQECEYPPTQDGRTAAWRTTSEEKKALDQASEEIWNDFREAAEAHRQVRKYVMSWIKPGMTMIEICEKLEDCSRKLIKENGLNAGLAFPTGCSLNNCAAHYTPNAGDTTVLQYDDICKIDFGTHISGRIIDCAFTVTFNPKYDTLLKAVKDATNTGIKCAGIDVRLCDVGEAIQEVMESYEVEIDGKTYQVKPIRNLNGHSIGQYRIHAGKTVPIVKGGEATRMEEGEVYAIETFGSTGKGVVHDDMECSHYMKNFDVGHVPIRLPRTKHLLNVINENFGTLAFCRRWLDRLGESKYLMALKNLCDLGIVDPYPPLCDIKGSYTAQFEHTILLRPTCKEVVSRGDDY.

Residues 1 to 122 (MAGVEEVAAS…TDPPSVPICD (122 aa)) are disordered. N-acetylalanine is present on A2. Over residues 36 to 46 (KKKRRKKKKSK) the composition is skewed to basic residues. S45 carries the post-translational modification Phosphoserine. Positions 55-79 (EPDKESGASVDEVARQLERSALEDK) are enriched in basic and acidic residues. S60 and S63 each carry phosphoserine; alternate. Residues S60 and S63 are each glycosylated (O-linked (GlcNAc) serine; alternate). Position 74 is a phosphoserine (S74). Residues 80-92 (ERDEDDEDGDGDG) are compositionally biased toward acidic residues. Basic residues predominate over residues 97–109 (GKKKKKKKKKRGP). H231 lines the substrate pocket. The a divalent metal cation site is built by D251, D262, and H331. Position 339 (H339) interacts with substrate. Residues E364 and E459 each contribute to the a divalent metal cation site.

Belongs to the peptidase M24A family. Methionine aminopeptidase eukaryotic type 2 subfamily. Interacts strongly with the eIF-2 gamma-subunit EIF2S3. Binds EIF2S1 at low magnesium concentrations. Co(2+) is required as a cofactor. Requires Zn(2+) as cofactor. The cofactor is Mn(2+). Fe(2+) serves as cofactor. Post-translationally, contains approximately 12 O-linked N-acetylglucosamine (GlcNAc) residues. O-glycosylation is required for EIF2S1 binding.

Its subcellular location is the cytoplasm. It catalyses the reaction Release of N-terminal amino acids, preferentially methionine, from peptides and arylamides.. Functionally, cotranslationally removes the N-terminal methionine from nascent proteins. The N-terminal methionine is often cleaved when the second residue in the primary sequence is small and uncharged (Met-Ala-, Cys, Gly, Pro, Ser, Thr, or Val). The catalytic activity of human METAP2 toward Met-Val peptides is consistently two orders of magnitude higher than that of METAP1, suggesting that it is responsible for processing proteins containing N-terminal Met-Val and Met-Thr sequences in vivo. In terms of biological role, protects eukaryotic initiation factor EIF2S1 from translation-inhibiting phosphorylation by inhibitory kinases such as EIF2AK2/PKR and EIF2AK1/HCR. Plays a critical role in the regulation of protein synthesis. This is Methionine aminopeptidase 2 from Homo sapiens (Human).